Here is a 199-residue protein sequence, read N- to C-terminus: Molybdenum cofactor guanylyltransferase (199 aa).

GTP contacts are provided by residues 12-14, Lys-25, Asn-53, Asp-71, and Asp-101; that span reads LAG. Asp-101 contacts Mg(2+).

It belongs to the MobA family. Monomer. It depends on Mg(2+) as a cofactor.

The protein localises to the cytoplasm. The enzyme catalyses Mo-molybdopterin + GTP + H(+) = Mo-molybdopterin guanine dinucleotide + diphosphate. Functionally, transfers a GMP moiety from GTP to Mo-molybdopterin (Mo-MPT) cofactor (Moco or molybdenum cofactor) to form Mo-molybdopterin guanine dinucleotide (Mo-MGD) cofactor. This is Molybdenum cofactor guanylyltransferase from Cupriavidus necator (strain ATCC 17699 / DSM 428 / KCTC 22496 / NCIMB 10442 / H16 / Stanier 337) (Ralstonia eutropha).